Consider the following 117-residue polypeptide: Large ribosomal subunit protein bL17 (117 aa).

This sequence belongs to the bacterial ribosomal protein bL17 family. In terms of assembly, part of the 50S ribosomal subunit. Contacts protein L32.

The polypeptide is Large ribosomal subunit protein bL17 (Neorickettsia sennetsu (strain ATCC VR-367 / Miyayama) (Ehrlichia sennetsu)).